A 473-amino-acid polypeptide reads, in one-letter code: Aspartyl/glutamyl-tRNA(Asn/Gln) amidotransferase subunit B (473 aa).

Belongs to the GatB/GatE family. GatB subfamily. Heterotrimer of A, B and C subunits.

It carries out the reaction L-glutamyl-tRNA(Gln) + L-glutamine + ATP + H2O = L-glutaminyl-tRNA(Gln) + L-glutamate + ADP + phosphate + H(+). The catalysed reaction is L-aspartyl-tRNA(Asn) + L-glutamine + ATP + H2O = L-asparaginyl-tRNA(Asn) + L-glutamate + ADP + phosphate + 2 H(+). Its function is as follows. Allows the formation of correctly charged Asn-tRNA(Asn) or Gln-tRNA(Gln) through the transamidation of misacylated Asp-tRNA(Asn) or Glu-tRNA(Gln) in organisms which lack either or both of asparaginyl-tRNA or glutaminyl-tRNA synthetases. The reaction takes place in the presence of glutamine and ATP through an activated phospho-Asp-tRNA(Asn) or phospho-Glu-tRNA(Gln). The chain is Aspartyl/glutamyl-tRNA(Asn/Gln) amidotransferase subunit B from Francisella tularensis subsp. tularensis (strain FSC 198).